The primary structure comprises 248 residues: Probable phosphatase VFMJ11_A0091 (248 aa).

Residues H8, H10, H16, H41, E74, H102, H132, D194, and H196 each contribute to the Zn(2+) site.

The protein belongs to the PHP family. Requires Zn(2+) as cofactor.

The chain is Probable phosphatase VFMJ11_A0091 from Aliivibrio fischeri (strain MJ11) (Vibrio fischeri).